A 309-amino-acid polypeptide reads, in one-letter code: Porphobilinogen deaminase (309 aa).

The residue at position 242 (Cys-242) is an S-(dipyrrolylmethanemethyl)cysteine.

This sequence belongs to the HMBS family. In terms of assembly, monomer. Dipyrromethane is required as a cofactor.

It carries out the reaction 4 porphobilinogen + H2O = hydroxymethylbilane + 4 NH4(+). The protein operates within porphyrin-containing compound metabolism; protoporphyrin-IX biosynthesis; coproporphyrinogen-III from 5-aminolevulinate: step 2/4. Its function is as follows. Tetrapolymerization of the monopyrrole PBG into the hydroxymethylbilane pre-uroporphyrinogen in several discrete steps. The chain is Porphobilinogen deaminase from Shewanella frigidimarina (strain NCIMB 400).